The primary structure comprises 271 residues: Putative hydro-lyase blr2921 (271 aa).

The protein belongs to the D-glutamate cyclase family.

This is Putative hydro-lyase blr2921 from Bradyrhizobium diazoefficiens (strain JCM 10833 / BCRC 13528 / IAM 13628 / NBRC 14792 / USDA 110).